Consider the following 236-residue polypeptide: MSDPVASAPRTKRVVRIVILVALALLALPYLLTILYGGGQPVSTLMLWRWATGAPVSRTWIDIENISPALPRSVVAAEDAKFCSHHGIDWDSVRDVIDDMQDGEASRGGSTITQQVAKNLFLWPGRSMIRKALEAPLALWIDFVLPKQRILEIYLNIAEWGPDGQFGAMAGADYAFGRSAAQLSAKEAATLAAILPNPRVRSAKAPGPGVRRLAATYVARARAAELRQCWRENRES.

Residues 17 to 37 form a helical membrane-spanning segment; the sequence is IVILVALALLALPYLLTILYG.

It belongs to the glycosyltransferase 51 family.

The protein localises to the cell inner membrane. The catalysed reaction is [GlcNAc-(1-&gt;4)-Mur2Ac(oyl-L-Ala-gamma-D-Glu-L-Lys-D-Ala-D-Ala)](n)-di-trans,octa-cis-undecaprenyl diphosphate + beta-D-GlcNAc-(1-&gt;4)-Mur2Ac(oyl-L-Ala-gamma-D-Glu-L-Lys-D-Ala-D-Ala)-di-trans,octa-cis-undecaprenyl diphosphate = [GlcNAc-(1-&gt;4)-Mur2Ac(oyl-L-Ala-gamma-D-Glu-L-Lys-D-Ala-D-Ala)](n+1)-di-trans,octa-cis-undecaprenyl diphosphate + di-trans,octa-cis-undecaprenyl diphosphate + H(+). It functions in the pathway cell wall biogenesis; peptidoglycan biosynthesis. Functionally, peptidoglycan polymerase that catalyzes glycan chain elongation from lipid-linked precursors. The sequence is that of Biosynthetic peptidoglycan transglycosylase from Rhodopseudomonas palustris (strain ATCC BAA-98 / CGA009).